The chain runs to 616 residues: Dihydroxy-acid dehydratase (616 aa).

Asp81 is a binding site for Mg(2+). [2Fe-2S] cluster is bound at residue Cys122. Mg(2+) contacts are provided by Asp123 and Lys124. The residue at position 124 (Lys124) is an N6-carboxylysine. Cys195 contacts [2Fe-2S] cluster. Glu491 is a Mg(2+) binding site. Ser517 functions as the Proton acceptor in the catalytic mechanism.

It belongs to the IlvD/Edd family. Homodimer. It depends on [2Fe-2S] cluster as a cofactor. Requires Mg(2+) as cofactor.

The enzyme catalyses (2R)-2,3-dihydroxy-3-methylbutanoate = 3-methyl-2-oxobutanoate + H2O. It carries out the reaction (2R,3R)-2,3-dihydroxy-3-methylpentanoate = (S)-3-methyl-2-oxopentanoate + H2O. The protein operates within amino-acid biosynthesis; L-isoleucine biosynthesis; L-isoleucine from 2-oxobutanoate: step 3/4. Its pathway is amino-acid biosynthesis; L-valine biosynthesis; L-valine from pyruvate: step 3/4. Functions in the biosynthesis of branched-chain amino acids. Catalyzes the dehydration of (2R,3R)-2,3-dihydroxy-3-methylpentanoate (2,3-dihydroxy-3-methylvalerate) into 2-oxo-3-methylpentanoate (2-oxo-3-methylvalerate) and of (2R)-2,3-dihydroxy-3-methylbutanoate (2,3-dihydroxyisovalerate) into 2-oxo-3-methylbutanoate (2-oxoisovalerate), the penultimate precursor to L-isoleucine and L-valine, respectively. In Salmonella agona (strain SL483), this protein is Dihydroxy-acid dehydratase.